Consider the following 187-residue polypeptide: Tumor necrosis factor ligand superfamily member 4 (187 aa).

Residues 1-23 lie on the Cytoplasmic side of the membrane; it reads MEGVRPLEENVGNAPRPRFERNK. The helical; Signal-anchor for type II membrane protein transmembrane segment at 24 to 44 threads the bilayer; that stretch reads LLLVASVVQALGLLLCLTYVC. At 45-187 the chain is on the extracellular side; the sequence is QHSHAPEVSL…LQNPGGYCAP (143 aa). Positions 58-177 constitute a THD domain; that stretch reads PIENIMTQLQ…SVNAGELIVI (120 aa). Intrachain disulfides connect Cys74–Cys164 and Cys101–Cys185. N-linked (GlcNAc...) asparagine glycosylation is found at Asn94 and Asn156.

This sequence belongs to the tumor necrosis factor family. In terms of assembly, homotrimer.

It localises to the membrane. In terms of biological role, cytokine that binds to TNFRSF4. Co-stimulates T-cell proliferation and cytokine production. This is Tumor necrosis factor ligand superfamily member 4 (TNFSF4) from Oryctolagus cuniculus (Rabbit).